We begin with the raw amino-acid sequence, 891 residues long: Alanine--tRNA ligase (891 aa).

Zn(2+) is bound by residues H564, H568, C678, and H682.

Belongs to the class-II aminoacyl-tRNA synthetase family. Zn(2+) serves as cofactor.

It is found in the cytoplasm. The enzyme catalyses tRNA(Ala) + L-alanine + ATP = L-alanyl-tRNA(Ala) + AMP + diphosphate. Functionally, catalyzes the attachment of alanine to tRNA(Ala) in a two-step reaction: alanine is first activated by ATP to form Ala-AMP and then transferred to the acceptor end of tRNA(Ala). Also edits incorrectly charged Ser-tRNA(Ala) and Gly-tRNA(Ala) via its editing domain. The chain is Alanine--tRNA ligase from Nitrobacter hamburgensis (strain DSM 10229 / NCIMB 13809 / X14).